Consider the following 129-residue polypeptide: MSRKESRVQAFQTLFQLEMKDSDLTINEAISFIKDDNPDLDFEFIHWLVSGVKDHEPVLDETISPNLKDWTIARLLKTDRIILRMATYEILHSDTPAKVVMNEAVELTKQFSDDDHYKFINGVLSNIKK.

This sequence belongs to the NusB family.

In terms of biological role, involved in transcription antitermination. Required for transcription of ribosomal RNA (rRNA) genes. Binds specifically to the boxA antiterminator sequence of the ribosomal RNA (rrn) operons. This Staphylococcus aureus (strain MRSA252) protein is Transcription antitermination protein NusB.